The primary structure comprises 117 residues: Large ribosomal subunit protein uL18 (117 aa).

Belongs to the universal ribosomal protein uL18 family. As to quaternary structure, part of the 50S ribosomal subunit; part of the 5S rRNA/L5/L18/L25 subcomplex. Contacts the 5S and 23S rRNAs.

Functionally, this is one of the proteins that bind and probably mediate the attachment of the 5S RNA into the large ribosomal subunit, where it forms part of the central protuberance. The chain is Large ribosomal subunit protein uL18 from Francisella tularensis subsp. tularensis (strain FSC 198).